A 414-amino-acid polypeptide reads, in one-letter code: Tryptophan synthase beta chain (414 aa).

Residues M1 to F26 form a disordered region. Residues Q10–F26 are compositionally biased toward basic and acidic residues. K109 is modified (N6-(pyridoxal phosphate)lysine).

The protein belongs to the TrpB family. As to quaternary structure, tetramer of two alpha and two beta chains. Pyridoxal 5'-phosphate is required as a cofactor.

The catalysed reaction is (1S,2R)-1-C-(indol-3-yl)glycerol 3-phosphate + L-serine = D-glyceraldehyde 3-phosphate + L-tryptophan + H2O. Its pathway is amino-acid biosynthesis; L-tryptophan biosynthesis; L-tryptophan from chorismate: step 5/5. The beta subunit is responsible for the synthesis of L-tryptophan from indole and L-serine. In Prochlorococcus marinus (strain MIT 9312), this protein is Tryptophan synthase beta chain.